We begin with the raw amino-acid sequence, 380 residues long: Erythronate-4-phosphate dehydrogenase (380 aa).

The substrate site is built by Ser45 and Thr66. NAD(+) contacts are provided by residues Asp146, Thr174, 205–207, and Asp231; that span reads ASR. Arg207 is an active-site residue. Glu236 is a catalytic residue. The active-site Proton donor is the His253. Gly256 provides a ligand contact to NAD(+). Tyr257 contributes to the substrate binding site.

The protein belongs to the D-isomer specific 2-hydroxyacid dehydrogenase family. PdxB subfamily. In terms of assembly, homodimer.

It is found in the cytoplasm. The enzyme catalyses 4-phospho-D-erythronate + NAD(+) = (R)-3-hydroxy-2-oxo-4-phosphooxybutanoate + NADH + H(+). It functions in the pathway cofactor biosynthesis; pyridoxine 5'-phosphate biosynthesis; pyridoxine 5'-phosphate from D-erythrose 4-phosphate: step 2/5. Its function is as follows. Catalyzes the oxidation of erythronate-4-phosphate to 3-hydroxy-2-oxo-4-phosphonooxybutanoate. The sequence is that of Erythronate-4-phosphate dehydrogenase from Pseudomonas fluorescens (strain SBW25).